A 379-amino-acid polypeptide reads, in one-letter code: Cytochrome b (379 aa).

Transmembrane regions (helical) follow at residues 33–53 (FGSL…FLAM), 77–98 (WTIR…FIHV), 113–133 (WNVG…GYVL), and 178–198 (FFAL…IHLL). Residues His83 and His97 each coordinate heme b. The heme b site is built by His182 and His196. His201 contacts a ubiquinone. 4 helical membrane passes run 226–246 (TKDF…ALFY), 288–308 (LGGV…PFLQ), 320–340 (LSQF…WIGG), and 347–367 (FINI…FIMP).

It belongs to the cytochrome b family. As to quaternary structure, the cytochrome bc1 complex contains 11 subunits: 3 respiratory subunits (MT-CYB, CYC1 and UQCRFS1), 2 core proteins (UQCRC1 and UQCRC2) and 6 low-molecular weight proteins (UQCRH/QCR6, UQCRB/QCR7, UQCRQ/QCR8, UQCR10/QCR9, UQCR11/QCR10 and a cleavage product of UQCRFS1). This cytochrome bc1 complex then forms a dimer. Heme b serves as cofactor.

The protein resides in the mitochondrion inner membrane. Functionally, component of the ubiquinol-cytochrome c reductase complex (complex III or cytochrome b-c1 complex) that is part of the mitochondrial respiratory chain. The b-c1 complex mediates electron transfer from ubiquinol to cytochrome c. Contributes to the generation of a proton gradient across the mitochondrial membrane that is then used for ATP synthesis. The protein is Cytochrome b (MT-CYB) of Lepilemur dorsalis (Grey-backed sportive lemur).